The following is a 314-amino-acid chain: Acetyl-coenzyme A carboxylase carboxyl transferase subunit beta, chloroplastic (314 aa).

Positions Leu47–Val314 constitute a CoA carboxyltransferase N-terminal domain. 4 residues coordinate Zn(2+): Cys51, Cys54, Cys70, and Cys73. The segment at Cys51–Cys73 adopts a C4-type zinc-finger fold.

This sequence belongs to the AccD/PCCB family. As to quaternary structure, acetyl-CoA carboxylase is a heterohexamer composed of biotin carboxyl carrier protein, biotin carboxylase and 2 subunits each of ACCase subunit alpha and ACCase plastid-coded subunit beta (accD). Zn(2+) serves as cofactor.

The protein resides in the plastid. Its subcellular location is the chloroplast stroma. The enzyme catalyses N(6)-carboxybiotinyl-L-lysyl-[protein] + acetyl-CoA = N(6)-biotinyl-L-lysyl-[protein] + malonyl-CoA. Its pathway is lipid metabolism; malonyl-CoA biosynthesis; malonyl-CoA from acetyl-CoA: step 1/1. Functionally, component of the acetyl coenzyme A carboxylase (ACC) complex. Biotin carboxylase (BC) catalyzes the carboxylation of biotin on its carrier protein (BCCP) and then the CO(2) group is transferred by the transcarboxylase to acetyl-CoA to form malonyl-CoA. This is Acetyl-coenzyme A carboxylase carboxyl transferase subunit beta, chloroplastic from Angiopteris lygodiifolia (Turnip fern).